A 178-amino-acid polypeptide reads, in one-letter code: Protein GrpE (178 aa).

The tract at residues 1–26 (MQDQDKYAEQAASMEEPASADAPAIV) is disordered.

This sequence belongs to the GrpE family. As to quaternary structure, homodimer.

Its subcellular location is the cytoplasm. Its function is as follows. Participates actively in the response to hyperosmotic and heat shock by preventing the aggregation of stress-denatured proteins, in association with DnaK and GrpE. It is the nucleotide exchange factor for DnaK and may function as a thermosensor. Unfolded proteins bind initially to DnaJ; upon interaction with the DnaJ-bound protein, DnaK hydrolyzes its bound ATP, resulting in the formation of a stable complex. GrpE releases ADP from DnaK; ATP binding to DnaK triggers the release of the substrate protein, thus completing the reaction cycle. Several rounds of ATP-dependent interactions between DnaJ, DnaK and GrpE are required for fully efficient folding. The sequence is that of Protein GrpE from Herminiimonas arsenicoxydans.